We begin with the raw amino-acid sequence, 164 residues long: DNA-directed RNA polymerase 19 kDa subunit (164 aa).

Positions 1–35 (MADTDDIIDYESDDLTEYEDDEEEEEDGESLETSD) are enriched in acidic residues. Residues 1–39 (MADTDDIIDYESDDLTEYEDDEEEEEDGESLETSDIDPK) are disordered.

Belongs to the poxviridae DNA-directed RNA polymerase 19 kDa subunit family. In terms of assembly, the DNA-dependent RNA polymerase used for intermediate and late genes expression consists of eight subunits Rpo30/OPG66, Rpo7/OPG90, Rpo22/OPG103, Rpo147/OPG105, Rpo18/OPG119, Rpo19/OPG131, Rpo132/OPG151 and Rpo35/OPG156. The same holoenzyme, with the addition of the transcription-specificity factor OPG109, is used for early gene expression.

Its subcellular location is the virion. It carries out the reaction RNA(n) + a ribonucleoside 5'-triphosphate = RNA(n+1) + diphosphate. Part of the DNA-dependent RNA polymerase which catalyzes the transcription of viral DNA into RNA using the four ribonucleoside triphosphates as substrates. Responsible for the transcription of early, intermediate and late genes. DNA-dependent RNA polymerase associates with the early transcription factor (ETF), itself composed of OPG118 and OPG133, thereby allowing the early genes transcription. Late transcription, and probably also intermediate transcription, require newly synthesized RNA polymerase. This is DNA-directed RNA polymerase 19 kDa subunit (OPG131) from Homo sapiens (Human).